Consider the following 314-residue polypeptide: NAC domain-containing protein 10 (314 aa).

Residues 18–39 show a composition bias toward polar residues; sequence VSNTDHPSVQLKDQSQSCVTSR. Disordered regions lie at residues 18–48 and 150–182; these read VSNT…SAET and YTTG…PVLS. Residues 77-236 enclose the NAC domain; it reads LPAGVKFDPS…EPVLSKVFYQ (160 aa). Over residues 160-171 the composition is skewed to basic and acidic residues; it reads VSTDEEGHETRW. A DNA-binding region spans residues 187 to 242; sequence TGFKKILVLYTNYGRQKKPEKTNWVMHQYHLGSSEDEKDGEPVLSKVFYQTQPRQC.

Expressed in protoxylem and elongating interfascicular fiber cells of elongating internodes, developing metaxylem cells and interfascicular fibers of non-elongating internodes and developing secondary xylem of roots.

It is found in the nucleus. Transcriptional activator that plays a regulatory role in the development of secondary cell wall fibers. Is a direct target of SND1. The chain is NAC domain-containing protein 10 from Arabidopsis thaliana (Mouse-ear cress).